The sequence spans 61 residues: Large ribosomal subunit protein uL30 (61 aa).

The protein belongs to the universal ribosomal protein uL30 family. As to quaternary structure, part of the 50S ribosomal subunit.

This Maricaulis maris (strain MCS10) (Caulobacter maris) protein is Large ribosomal subunit protein uL30.